The chain runs to 245 residues: 1-(5-phosphoribosyl)-5-[(5-phosphoribosylamino)methylideneamino] imidazole-4-carboxamide isomerase (245 aa).

Residue aspartate 8 is the Proton acceptor of the active site. The active-site Proton donor is aspartate 130.

The protein belongs to the HisA/HisF family.

It is found in the cytoplasm. It catalyses the reaction 1-(5-phospho-beta-D-ribosyl)-5-[(5-phospho-beta-D-ribosylamino)methylideneamino]imidazole-4-carboxamide = 5-[(5-phospho-1-deoxy-D-ribulos-1-ylimino)methylamino]-1-(5-phospho-beta-D-ribosyl)imidazole-4-carboxamide. Its pathway is amino-acid biosynthesis; L-histidine biosynthesis; L-histidine from 5-phospho-alpha-D-ribose 1-diphosphate: step 4/9. This chain is 1-(5-phosphoribosyl)-5-[(5-phosphoribosylamino)methylideneamino] imidazole-4-carboxamide isomerase, found in Teredinibacter turnerae (strain ATCC 39867 / T7901).